The sequence spans 210 residues: Dephospho-CoA kinase (210 aa).

One can recognise a DPCK domain in the interval 4–202 (WVGLTGGIGS…AFYSGIFASK (199 aa)). Residue 12–17 (GSGKSA) coordinates ATP.

The protein belongs to the CoaE family.

The protein resides in the cytoplasm. It carries out the reaction 3'-dephospho-CoA + ATP = ADP + CoA + H(+). The protein operates within cofactor biosynthesis; coenzyme A biosynthesis; CoA from (R)-pantothenate: step 5/5. Functionally, catalyzes the phosphorylation of the 3'-hydroxyl group of dephosphocoenzyme A to form coenzyme A. This Neisseria meningitidis serogroup B (strain ATCC BAA-335 / MC58) protein is Dephospho-CoA kinase.